We begin with the raw amino-acid sequence, 70 residues long: UPF0270 protein VV1_1320 (70 aa).

Belongs to the UPF0270 family.

In Vibrio vulnificus (strain CMCP6), this protein is UPF0270 protein VV1_1320.